A 370-amino-acid polypeptide reads, in one-letter code: GTPase Obg (370 aa).

The Obg domain maps to 1 to 159 (MKFIDEARIE…RMVRLELKVL (159 aa)). A disordered region spans residues 127-147 (NLHFKSSTNRAPRQKTDGKPG). The OBG-type G domain maps to 160–334 (ADVGLLGMPN…LCYAVYDYLA (175 aa)). GTP contacts are provided by residues 166-173 (GMPNAGKS), 191-195 (FTTLA), 213-216 (DIPG), 284-287 (NKLD), and 315-317 (SAL). Mg(2+) contacts are provided by Ser173 and Thr193.

The protein belongs to the TRAFAC class OBG-HflX-like GTPase superfamily. OBG GTPase family. Monomer. Requires Mg(2+) as cofactor.

Its subcellular location is the cytoplasm. Functionally, an essential GTPase which binds GTP, GDP and possibly (p)ppGpp with moderate affinity, with high nucleotide exchange rates and a fairly low GTP hydrolysis rate. Plays a role in control of the cell cycle, stress response, ribosome biogenesis and in those bacteria that undergo differentiation, in morphogenesis control. The chain is GTPase Obg from Paraburkholderia phymatum (strain DSM 17167 / CIP 108236 / LMG 21445 / STM815) (Burkholderia phymatum).